We begin with the raw amino-acid sequence, 38 residues long: Large ribosomal subunit protein bL36 (38 aa).

Belongs to the bacterial ribosomal protein bL36 family.

The sequence is that of Large ribosomal subunit protein bL36 from Proteus mirabilis (strain HI4320).